The chain runs to 233 residues: Large ribosomal subunit protein mL67 (233 aa).

A disordered region spans residues 214–233 (RQQAQQSEQQSQSELESQTA). The span at 215–233 (QQAQQSEQQSQSELESQTA) shows a compositional bias: low complexity.

The protein belongs to the mitochondrion-specific ribosomal protein mL67 family.

The protein resides in the nucleus. The protein localises to the mitochondrion. In terms of biological role, transcription factor involved in regulation of RNA polymerase II-dependent transcription. Also involved in regulation of mitochondrial DNA recombination, maintenance and repair, and generation of homoplasmic cells. The protein is Large ribosomal subunit protein mL67 (MHR1) of Debaryomyces hansenii (strain ATCC 36239 / CBS 767 / BCRC 21394 / JCM 1990 / NBRC 0083 / IGC 2968) (Yeast).